The primary structure comprises 272 residues: Phosphatidylglycerol--prolipoprotein diacylglyceryl transferase (272 aa).

The next 4 helical transmembrane spans lie at 15 to 35 (LGPL…LVLF), 53 to 73 (AFAV…WHVV), 90 to 110 (IWEG…CFFV), and 117 to 137 (VPPF…LCFA). Residue R138 coordinates a 1,2-diacyl-sn-glycero-3-phospho-(1'-sn-glycerol). 3 consecutive transmembrane segments (helical) span residues 174–194 (FHPI…ILLV), 199–219 (VFVK…VLYG), and 237–257 (FGLD…VLIA).

This sequence belongs to the Lgt family.

The protein localises to the cell membrane. The catalysed reaction is L-cysteinyl-[prolipoprotein] + a 1,2-diacyl-sn-glycero-3-phospho-(1'-sn-glycerol) = an S-1,2-diacyl-sn-glyceryl-L-cysteinyl-[prolipoprotein] + sn-glycerol 1-phosphate + H(+). It functions in the pathway protein modification; lipoprotein biosynthesis (diacylglyceryl transfer). Its function is as follows. Catalyzes the transfer of the diacylglyceryl group from phosphatidylglycerol to the sulfhydryl group of the N-terminal cysteine of a prolipoprotein, the first step in the formation of mature lipoproteins. The chain is Phosphatidylglycerol--prolipoprotein diacylglyceryl transferase from Tropheryma whipplei (strain Twist) (Whipple's bacillus).